Reading from the N-terminus, the 661-residue chain is Arginine--tRNA ligase, cytoplasmic (661 aa).

Position 1 is an N-acetylmethionine (M1). A could be involved in the assembly of the multisynthetase complex region spans residues 1–73 (MDGLVAQCSA…AEKRRRPTKN (73 aa)). Residues 201 to 203 (SPN), H212, Y385, D389, and Q413 contribute to the L-arginine site. A 'HIGH' region motif is present at residues 202–213 (PNIAKEMHVGHL). Residues 530 to 544 (NTAAYLLYAFTRIRS) form an interaction with tRNA region.

This sequence belongs to the class-I aminoacyl-tRNA synthetase family. As to quaternary structure, interacts (via N-terminus) with AIMP1 (via N-terminus); this stimulates its catalytic activity. Interacts (via N-terminus) with LARS2 (via C-terminus). Monomer. Part of a multisubunit complex that groups tRNA ligases for Arg (RARS1), Asp (DARS1), Gln (QARS1), Ile (IARS1), Leu (LARS1), Lys (KARS1), Met (MARS1) the bifunctional ligase for Glu and Pro (EPRS1) and the auxiliary subunits AIMP1/p43, AIMP2/p38 and EEF1E1/p18. Interacts with QARS1. Part of a complex composed of RARS1, QARS1 and AIMP1.

It is found in the cytoplasm. The protein resides in the cytosol. It catalyses the reaction tRNA(Arg) + L-arginine + ATP = L-arginyl-tRNA(Arg) + AMP + diphosphate. Its function is as follows. Forms part of a macromolecular complex that catalyzes the attachment of specific amino acids to cognate tRNAs during protein synthesis. Modulates the secretion of AIMP1 and may be involved in generation of the inflammatory cytokine EMAP2 from AIMP1. This chain is Arginine--tRNA ligase, cytoplasmic (RARS1), found in Cricetulus griseus (Chinese hamster).